The primary structure comprises 126 residues: Small ribosomal subunit protein uS13 (126 aa).

The disordered stretch occupies residues 94–126 (RGLPVHGQRTSTNARTRKGPRRAIAGKKKPGKK). Positions 108–126 (RTRKGPRRAIAGKKKPGKK) are enriched in basic residues.

This sequence belongs to the universal ribosomal protein uS13 family. Part of the 30S ribosomal subunit. Forms a loose heterodimer with protein S19. Forms two bridges to the 50S subunit in the 70S ribosome.

Located at the top of the head of the 30S subunit, it contacts several helices of the 16S rRNA. In the 70S ribosome it contacts the 23S rRNA (bridge B1a) and protein L5 of the 50S subunit (bridge B1b), connecting the 2 subunits; these bridges are implicated in subunit movement. Contacts the tRNAs in the A and P-sites. This Streptomyces avermitilis (strain ATCC 31267 / DSM 46492 / JCM 5070 / NBRC 14893 / NCIMB 12804 / NRRL 8165 / MA-4680) protein is Small ribosomal subunit protein uS13.